Reading from the N-terminus, the 369-residue chain is Cell division protein FtsZ (369 aa).

Residues 27-31 (GAGNN), 119-121 (GTG), E150, and N189 each bind GTP.

The protein belongs to the FtsZ family. As to quaternary structure, homodimer. Polymerizes to form a dynamic ring structure in a strictly GTP-dependent manner. Interacts directly with several other division proteins.

Its subcellular location is the cytoplasm. In terms of biological role, essential cell division protein that forms a contractile ring structure (Z ring) at the future cell division site. The regulation of the ring assembly controls the timing and the location of cell division. One of the functions of the FtsZ ring is to recruit other cell division proteins to the septum to produce a new cell wall between the dividing cells. Binds GTP and shows GTPase activity. The polypeptide is Cell division protein FtsZ (Mycoplasma genitalium (strain ATCC 33530 / DSM 19775 / NCTC 10195 / G37) (Mycoplasmoides genitalium)).